The sequence spans 548 residues: Membrane protein insertase YidC (548 aa).

A helical transmembrane segment spans residues 6–26 (NLLVIALLFVSFMIWQAWEQD). Positions 28 to 56 (NPQPQTQQTTQTTTTAAGSAADQGVPASG) are disordered. Over residues 29–42 (PQPQTQQTTQTTTT) the composition is skewed to low complexity. The next 4 helical transmembrane spans lie at 350-370 (FVGNWGFSIIIITFIVRGIMY), 424-444 (FPLIIQMPIFLALYYMLMGSI), 458-478 (LSAQDPYYILPILMGVTMFFI), and 499-519 (PVIFTVFFLWFPSGLVLYYIV).

The protein belongs to the OXA1/ALB3/YidC family. Type 1 subfamily. Interacts with the Sec translocase complex via SecD. Specifically interacts with transmembrane segments of nascent integral membrane proteins during membrane integration.

The protein localises to the cell inner membrane. Functionally, required for the insertion and/or proper folding and/or complex formation of integral membrane proteins into the membrane. Involved in integration of membrane proteins that insert both dependently and independently of the Sec translocase complex, as well as at least some lipoproteins. Aids folding of multispanning membrane proteins. In Salmonella choleraesuis (strain SC-B67), this protein is Membrane protein insertase YidC.